A 481-amino-acid polypeptide reads, in one-letter code: Aspartyl/glutamyl-tRNA(Asn/Gln) amidotransferase subunit B (481 aa).

This sequence belongs to the GatB/GatE family. GatB subfamily. In terms of assembly, heterotrimer of A, B and C subunits.

The enzyme catalyses L-glutamyl-tRNA(Gln) + L-glutamine + ATP + H2O = L-glutaminyl-tRNA(Gln) + L-glutamate + ADP + phosphate + H(+). It carries out the reaction L-aspartyl-tRNA(Asn) + L-glutamine + ATP + H2O = L-asparaginyl-tRNA(Asn) + L-glutamate + ADP + phosphate + 2 H(+). Allows the formation of correctly charged Asn-tRNA(Asn) or Gln-tRNA(Gln) through the transamidation of misacylated Asp-tRNA(Asn) or Glu-tRNA(Gln) in organisms which lack either or both of asparaginyl-tRNA or glutaminyl-tRNA synthetases. The reaction takes place in the presence of glutamine and ATP through an activated phospho-Asp-tRNA(Asn) or phospho-Glu-tRNA(Gln). The protein is Aspartyl/glutamyl-tRNA(Asn/Gln) amidotransferase subunit B of Pseudomonas fluorescens (strain ATCC BAA-477 / NRRL B-23932 / Pf-5).